The chain runs to 303 residues: Probable acetylxylan esterase A (303 aa).

Residues 1–23 (MLSTHLLFLATTLLTSLFHPIAA) form the signal peptide. S147 acts as the Charge relay system in catalysis. N-linked (GlcNAc...) asparagine glycosylation is present at N189.

The protein belongs to the carbohydrate esterase 1 (CE1) family. AxeA subfamily. In terms of assembly, monomer.

The protein resides in the secreted. The enzyme catalyses Deacetylation of xylans and xylo-oligosaccharides.. Its pathway is glycan degradation; xylan degradation. Its function is as follows. Acetylxylan esterase involved in the hydrolysis of xylan, a major structural heterogeneous polysaccharide found in plant biomass representing the second most abundant polysaccharide in the biosphere, after cellulose. Degrades acetylated xylans by cleaving acetyl side groups from the hetero-xylan backbone. This Aspergillus niger (strain ATCC MYA-4892 / CBS 513.88 / FGSC A1513) protein is Probable acetylxylan esterase A (axeA).